The following is a 152-amino-acid chain: Protein eva-1 homolog A (152 aa).

The necessary for the localization and biological activity stretch occupies residues 1 to 60 (MRLPLSHSPEHVEMALLSNILAAYSFVSENPERAALYFVSGVCIGLVLTLAALVIRISCH). A helical transmembrane segment spans residues 35 to 55 (ALYFVSGVCIGLVLTLAALVI). Residues 70–97 (KFLQDRESSSDSSDSEDGSEDTVSDLSV) form a disordered region. Residues 82–92 (SDSEDGSEDTV) show a composition bias toward acidic residues. At threonine 106 the chain carries Phosphothreonine. Serine 114 is subject to Phosphoserine; by FAM20C.

It belongs to the EVA1 family. In terms of tissue distribution, expressed in lung, kidney, liver, pancreas, placenta, but not in heart and skeletal muscle.

It localises to the endoplasmic reticulum membrane. The protein resides in the lysosome membrane. Acts as a regulator of programmed cell death, mediating both autophagy and apoptosis. The polypeptide is Protein eva-1 homolog A (EVA1A) (Homo sapiens (Human)).